A 380-amino-acid polypeptide reads, in one-letter code: Putative ankyrin repeat protein RF_1306 (380 aa).

ANK repeat units follow at residues 48–76 (NKWS…NINA), 80–109 (KCRT…KIAP), 112–143 (YGWS…KYDK), 170–199 (NNKT…KFDI), 203–233 (LGYK…GKNT), 239–268 (LEKV…GFDK), 270–299 (LGQK…DAQY), 303–333 (LGRS…DINY), and 337–366 (SGLN…YESY).

This Rickettsia felis (strain ATCC VR-1525 / URRWXCal2) (Rickettsia azadi) protein is Putative ankyrin repeat protein RF_1306.